We begin with the raw amino-acid sequence, 108 residues long: UPF0060 membrane protein Mfla_0485 (108 aa).

4 consecutive transmembrane segments (helical) span residues 7–27 (FSLFILTALAEILGCYLPYLW), 33–53 (SVWLLLPAAISLAVFAWLLSL), 63–83 (AAYGGVYIFVALGWLWLVDGI), and 87–107 (TWDFVGVGVALAGMAIIMFAP).

It belongs to the UPF0060 family.

It localises to the cell inner membrane. This chain is UPF0060 membrane protein Mfla_0485, found in Methylobacillus flagellatus (strain ATCC 51484 / DSM 6875 / VKM B-1610 / KT).